The chain runs to 274 residues: Diaminopimelate epimerase (274 aa).

Residues Asn11, Gln44, and Asn64 each contribute to the substrate site. The active-site Proton donor is Cys73. Substrate contacts are provided by residues 74 to 75 (GN), Asn157, Asn190, and 208 to 209 (ER). The active-site Proton acceptor is the Cys217. 218-219 (GS) is a binding site for substrate.

Belongs to the diaminopimelate epimerase family. In terms of assembly, homodimer.

It is found in the cytoplasm. The enzyme catalyses (2S,6S)-2,6-diaminopimelate = meso-2,6-diaminopimelate. It participates in amino-acid biosynthesis; L-lysine biosynthesis via DAP pathway; DL-2,6-diaminopimelate from LL-2,6-diaminopimelate: step 1/1. In terms of biological role, catalyzes the stereoinversion of LL-2,6-diaminopimelate (L,L-DAP) to meso-diaminopimelate (meso-DAP), a precursor of L-lysine and an essential component of the bacterial peptidoglycan. This chain is Diaminopimelate epimerase, found in Haemophilus influenzae (strain PittEE).